The chain runs to 102 residues: Large ribosomal subunit protein bL28 (102 aa).

This sequence belongs to the bacterial ribosomal protein bL28 family.

This chain is Large ribosomal subunit protein bL28, found in Bradyrhizobium diazoefficiens (strain JCM 10833 / BCRC 13528 / IAM 13628 / NBRC 14792 / USDA 110).